Here is a 211-residue protein sequence, read N- to C-terminus: Large ribosomal subunit protein eL13 (211 aa).

Belongs to the eukaryotic ribosomal protein eL13 family. In terms of assembly, component of the 60S large ribosomal subunit (LSU).

It localises to the cytoplasm. Component of the ribosome, a large ribonucleoprotein complex responsible for the synthesis of proteins in the cell. The small ribosomal subunit (SSU) binds messenger RNAs (mRNAs) and translates the encoded message by selecting cognate aminoacyl-transfer RNA (tRNA) molecules. The large subunit (LSU) contains the ribosomal catalytic site termed the peptidyl transferase center (PTC), which catalyzes the formation of peptide bonds, thereby polymerizing the amino acids delivered by tRNAs into a polypeptide chain. The nascent polypeptides leave the ribosome through a tunnel in the LSU and interact with protein factors that function in enzymatic processing, targeting, and the membrane insertion of nascent chains at the exit of the ribosomal tunnel. As part of the LSU, it is probably required for its formation and the maturation of rRNAs. In Gallus gallus (Chicken), this protein is Large ribosomal subunit protein eL13 (RPL13).